The primary structure comprises 954 residues: Zinc finger protein 618 (954 aa).

Met-1 bears the N-acetylmethionine mark. The segment covering 1 to 19 has biased composition (low complexity); the sequence is MNQPGGAAAPQADGASAAG. The tract at residues 1 to 56 is disordered; the sequence is MNQPGGAAAPQADGASAAGRKSTASRERLKRSQKSTKVEGPEPVPAEASLSAEQGT. Residues Lys-63 and Lys-81 each participate in a glycyl lysine isopeptide (Lys-Gly) (interchain with G-Cter in SUMO2) cross-link. 2 C2H2-type zinc fingers span residues 147-169 and 188-210; these read YECG…VRAH and YTCD…RDLH. Lys-239 is covalently cross-linked (Glycyl lysine isopeptide (Lys-Gly) (interchain with G-Cter in SUMO2)). The C2H2-type 3 zinc-finger motif lies at 256–278; it reads YTCEFCGKQYKYYTPYQEHVALH. Disordered stretches follow at residues 282–307 and 337–390; these read STAP…VSPS and RTPP…NSSE. Residues 340–357 show a composition bias toward polar residues; that stretch reads PATQTQTFRTPNSGSPAS. The segment covering 366–380 has biased composition (basic and acidic residues); sequence FSRRVEGKAQNHFEE. The C2H2-type 4 zinc finger occupies 392-414; the sequence is YTCGACGIQFQFYNNLLEHMQSH. Residues 421-463 form a disordered region; that stretch reads NIASNQSRSPPAVVEEKWKPQAQRNSANNTTTSGLTPNSMIPE. Lys-437 participates in a covalent cross-link: Glycyl lysine isopeptide (Lys-Gly) (interchain with G-Cter in SUMO2). The segment covering 442 to 459 has biased composition (polar residues); that stretch reads AQRNSANNTTTSGLTPNS.

It belongs to the krueppel C2H2-type zinc-finger protein family. In terms of assembly, interacts with UHRF2.

It localises to the nucleus. Its subcellular location is the chromosome. Regulates UHRF2 function as a specific 5-hydroxymethylcytosine (5hmC) reader by regulating its chromatin localization. This chain is Zinc finger protein 618 (ZNF618), found in Homo sapiens (Human).